The chain runs to 380 residues: Variant-surface-glycoprotein phospholipase C (380 aa).

The region spanning 31-205 is the PI-PLC X-box domain; it reads ITQVCFVGSH…SRRRIFLVVG (175 aa).

Monomer.

It is found in the membrane. The catalysed reaction is a 6-(alpha-D-glucosaminyl)-1-(1,2-diacyl-sn-glycero-3-phospho)-1D-myo-inositol = 6-(alpha-D-glucosaminyl)-1D-myo-inositol 1,2-cyclic phosphate + a 1,2-diacyl-sn-glycerol. In terms of biological role, by hydrolysis of the attached glycolipid, releases soluble variant surface glycoprotein containing phosphoinositol from the cell wall of T.brucei after cell lysis. It also cleaves similar membrane anchors on some mammalian proteins. VSG lipase may play a role in processes such as parasite differentiation or antigenic variation. The protein is Variant-surface-glycoprotein phospholipase C of Trypanosoma cruzi.